Here is a 330-residue protein sequence, read N- to C-terminus: uncharacterized protein (330 aa).

Belongs to the ornithine cyclodeaminase/mu-crystallin family.

The protein localises to the cytoplasm. This is an uncharacterized protein from Schizosaccharomyces pombe (strain 972 / ATCC 24843) (Fission yeast).